We begin with the raw amino-acid sequence, 423 residues long: Probable sucrose-phosphate synthase (423 aa).

This sequence belongs to the glycosyltransferase 1 family.

The enzyme catalyses beta-D-fructose 6-phosphate + UDP-alpha-D-glucose = sucrose 6(F)-phosphate + UDP + H(+). In terms of biological role, plays a role in sucrose synthesis by catalyzing the first step of sucrose biosynthesis from UDP-glucose and fructose-6-phosphate. In Thermosipho melanesiensis (strain DSM 12029 / CIP 104789 / BI429), this protein is Probable sucrose-phosphate synthase.